The sequence spans 842 residues: Outer membrane usher protein AggC (842 aa).

Positions 1 to 21 are cleaved as a signal peptide; sequence MKTSSFIIVILLCFRIENVIA. A disulfide bridge connects residues C819 and C841.

Belongs to the fimbrial export usher family.

The protein resides in the cell outer membrane. In terms of biological role, involved in the export and assembly of the AAF/I fimbriae subunits across the outer membrane. This chain is Outer membrane usher protein AggC (aggC), found in Escherichia coli.